The chain runs to 170 residues: Protein SprT (170 aa).

The 142-residue stretch at 23 to 164 (QLARQHFSVE…CRQCGDKLKF (142 aa)) folds into the SprT-like domain. Histidine 78 contacts Zn(2+). Glutamate 79 is a catalytic residue. Histidine 82 provides a ligand contact to Zn(2+).

Belongs to the SprT family. Zn(2+) is required as a cofactor.

The protein resides in the cytoplasm. In Serratia proteamaculans (strain 568), this protein is Protein SprT.